The primary structure comprises 290 residues: MNKVGMFYTYWSTEWMVDFPATAKRIAGLGFDLMEISLGEFHNLSDAKKRELKAVADDLGLTVMCCIGLKSEYDFASPDKSVRDAGTEYVKRLLDDCHLLGAPVFAGLTFCAWPQSPPLDMKDKRPYVDRAIESVRRVIKVAEDYGIIYALEVVNRFEQWLCNDAKEAIAFADAVDSPACKVQLDTFHMNIEETSFRDAILACKGKMGHFHLGEANRLPPGEGRLPWDEIFGALKEIGYDGTIVMEPFMRKGGSVSRAVGVWRDMSNGATDEEMDERARRSLQFVRDKLA.

Cysteine 66 lines the substrate pocket. Glutamate 152 serves as the catalytic Proton donor/acceptor. Glutamate 152 is a Mn(2+) binding site. Residues glutamate 158 and 185 to 188 each bind substrate; that span reads DTFH. The Mn(2+) site is built by aspartate 185 and histidine 211. Substrate is bound at residue arginine 217. Catalysis depends on glutamate 246, which acts as the Proton donor/acceptor. Glutamate 246 contributes to the Mn(2+) binding site.

This sequence belongs to the hyi family. In terms of assembly, homodimer. It depends on Mn(2+) as a cofactor.

It carries out the reaction keto-D-tagatose = keto-D-sorbose. It catalyses the reaction D-allulose = keto-D-fructose. The enzyme catalyses D-ribulose = D-xylulose. Its activity is regulated as follows. Strongly inhibited (about 90% of the enzyme activity) by Ag(+), Hg(2+) and p-chloromercuribenzoic acid. Cu(2+) and Zn(2+) inhibit about 60% of the enzyme activity. Functionally, catalyzes the epimerization of various ketoses at the C(3) position. It is able to interconvert D-tagatose and D-ribulose to D-sorbose and D-xylulose, respectively. The enzyme is also able to accept other ketopentoses such as D-psicose with lower efficiency. In Pseudomonas cichorii, this protein is D-tagatose 3-epimerase.